We begin with the raw amino-acid sequence, 60 residues long: UPF0434 protein YcaR (60 aa).

The protein belongs to the UPF0434 family.

The protein is UPF0434 protein YcaR of Escherichia coli O139:H28 (strain E24377A / ETEC).